We begin with the raw amino-acid sequence, 208 residues long: Uracil phosphoribosyltransferase (208 aa).

Residues arginine 78, arginine 103, and 130–138 (DPMLATGGS) contribute to the 5-phospho-alpha-D-ribose 1-diphosphate site. Residues isoleucine 193 and 198–200 (GDA) each bind uracil. Aspartate 199 is a binding site for 5-phospho-alpha-D-ribose 1-diphosphate.

Belongs to the UPRTase family. Requires Mg(2+) as cofactor.

It carries out the reaction UMP + diphosphate = 5-phospho-alpha-D-ribose 1-diphosphate + uracil. It functions in the pathway pyrimidine metabolism; UMP biosynthesis via salvage pathway; UMP from uracil: step 1/1. Allosterically activated by GTP. Its function is as follows. Catalyzes the conversion of uracil and 5-phospho-alpha-D-ribose 1-diphosphate (PRPP) to UMP and diphosphate. The sequence is that of Uracil phosphoribosyltransferase from Blochmanniella pennsylvanica (strain BPEN).